A 416-amino-acid polypeptide reads, in one-letter code: MSSALDDPTLERNFKGHRDAITSLDFSPSGKQIASGSVDASVMVWNMKPQSRAYRFTGHKDAVTCVQFSPSAHLLASSSRDKTVRLWVPSVKGESVLFRAHTGSVRSVCFSADGQSLLTASDDQSIKLWSVHRQKIICTLREHNNWVRCARFSPDGQLMVSVSDDRTVKLWDASSRQLIHTFCEPGGYSSYVDFHPSSTCIATASSDNTVRVWDIRTHTLLQHYQVHSAAVNALSFHPSGNHLLTASSDSTLKILDLLEGRLLYTLHGHQGSASCVSFSRSGDQFASAGSDQQVMVWRTNFDSVDYSRVLQQKRDHRTPSAQASGAAGDPESRSGQKTEVSPLLGVSAERSVREPTPQQQTDADGVPAALTSTLQHIIGQLDVLTQTVAILEQRLTLTEDKLKECLEQQHQALTEH.

WD repeat units follow at residues 16–55 (GHRD…RAYR), 58–97 (GHKD…ESVL), 100–139 (AHTG…IICT), 142–181 (EHNN…LIHT), 184–223 (EPGG…LLQH), 226–265 (VHSA…LLYT), and 268–307 (GHQG…VDYS). Residues 311 to 340 (QQKRDHRTPSAQASGAAGDPESRSGQKTEV) form a disordered region. Residues 380 to 412 (QLDVLTQTVAILEQRLTLTEDKLKECLEQQHQA) adopt a coiled-coil conformation.

It belongs to the WD repeat POC1 family.

Its function is as follows. May play an important role in centriole assembly and/or stability and ciliogenesis. This chain is POC1 centriolar protein homolog A, found in Danio rerio (Zebrafish).